The chain runs to 379 residues: Cyclic dinucleotide synthase CdnE (379 aa).

4 residues coordinate UTP: Gln-107, Ser-109, Asp-123, and Lys-179. Mg(2+) is bound at residue Asp-123. Asp-193 is a Mg(2+) binding site. Residues Asn-229, Lys-257, and Ser-274 each coordinate UTP. The Pyrimidine specificity motif (R/Q)xW in donor pocket motif lies at Lys-328 to Phe-330.

This sequence belongs to the CD-NTase family. E02 subfamily. Mg(2+) is required as a cofactor.

The catalysed reaction is 2 UTP = c-di-UMP + 2 diphosphate. The enzyme catalyses UTP + ATP = 3',3'-cUAMP + 2 diphosphate. It catalyses the reaction UTP + CTP = cyclic CMP-UMP + 2 diphosphate. Functionally, cyclic nucleotide synthase (second messenger synthase) of a CBASS antivirus system. CBASS (cyclic oligonucleotide-based antiphage signaling system) provides immunity against bacteriophage. The CD-NTase protein synthesizes cyclic nucleotides in response to infection; these serve as specific second messenger signals. The signals activate a diverse range of effectors, leading to bacterial cell death and thus abortive phage infection. The effector protein for this system is membrane protein Cap15. A type I-B(UU) CBASS system. Cyclic dinucleotide synthase that preferentially catalyzes the synthesis of 3',3'-cyclic UMP-UMP (c-di-UMP) and 3',3'-cyclic UMP-AMP, with minor amounts of 3',3'-cyclic UMP-CMP, which are second messengers for cell signal transduction. Its function is as follows. Protects E.coli against phage infection. When the CBASS operon (cap15-cdnE) is introduced in E.coli MG1655 it protects against phages T2, T4, T5, T6, SECPhi4, SECPhi6, SECPhi17, SECPhi18 and SECPhi27, but not against phage T7. The chain is Cyclic dinucleotide synthase CdnE from Yersinia aleksiciae.